We begin with the raw amino-acid sequence, 549 residues long: Glucose-6-phosphate isomerase (549 aa).

E355 functions as the Proton donor in the catalytic mechanism. Active-site residues include H386 and K514.

The protein belongs to the GPI family.

Its subcellular location is the cytoplasm. The enzyme catalyses alpha-D-glucose 6-phosphate = beta-D-fructose 6-phosphate. It functions in the pathway carbohydrate biosynthesis; gluconeogenesis. The protein operates within carbohydrate degradation; glycolysis; D-glyceraldehyde 3-phosphate and glycerone phosphate from D-glucose: step 2/4. In terms of biological role, catalyzes the reversible isomerization of glucose-6-phosphate to fructose-6-phosphate. The chain is Glucose-6-phosphate isomerase from Salmonella arizonae (strain ATCC BAA-731 / CDC346-86 / RSK2980).